The sequence spans 180 residues: Chorion protein S19 (180 aa).

Positions 1–21 (MNTFATLAVLFCACLIGNCHG) are cleaved as a signal peptide.

Belongs to the chorion protein S19 family.

It localises to the secreted. Functionally, chorion membrane (egg shell) protein; plays a role in protecting the egg from the environment. The polypeptide is Chorion protein S19 (Cp19) (Drosophila subobscura (Fruit fly)).